The primary structure comprises 443 residues: Serine/threonine-protein phosphatase 2A 55 kDa regulatory subunit B beta isoform (443 aa).

WD repeat units follow at residues 22-61, 87-128, 171-209, 220-260, 279-317, 334-375, and 410-443; these read TEADIISTVEFNSTGELLATGDKGGRVVIFQREQENKNQP, EIEE…KRPE, AHTYHINSISVNSDYETYMSADDLRINLWNLEITNRSFN, ELTE…LCDR, EIISSISDVKFNHSGRYIMTRDYLTVKVWDLNMENRPIE, ENDC…DVTL, and DFSKKILHTAWHPSENIIAVAATNNLYIFQDKVN.

This sequence belongs to the phosphatase 2A regulatory subunit B family. As to quaternary structure, PP2A consists of a common heterodimeric core enzyme, composed of a 36 kDa catalytic subunit (subunit C) and a 65 kDa constant regulatory subunit (PR65 or subunit A), that associates with a variety of regulatory subunits.

Its subcellular location is the cytoplasm. It is found in the cytoskeleton. The protein localises to the membrane. The B regulatory subunit might modulate substrate selectivity and catalytic activity, and might also direct the localization of the catalytic enzyme to a particular subcellular compartment. Negatively controls the initiation of oocyte maturation. The sequence is that of Serine/threonine-protein phosphatase 2A 55 kDa regulatory subunit B beta isoform (ppp2r2b) from Xenopus tropicalis (Western clawed frog).